Consider the following 131-residue polypeptide: MDVEIFPHRLLSAETTEKLLNKLGEIEGIKRMIIQGQRLPAGEHPDRRVINVKGQDIELKVKTGRIFVEIEDKKTMEKIKEVCDEVFPFKYELIPGTFFRRQKTVTDAIKFGKDVDKLPTELVGMTDTVLD.

In terms of assembly, MCR is composed of three subunits: alpha, beta, and gamma. The function of proteins C and D is not known.

In Methanothermus fervidus, this protein is Methyl-coenzyme M reductase operon protein D (mcrD).